The primary structure comprises 116 residues: MKKRNRLKKNEDFQKVFKRGTSMANRQFVLYTLDQPKQEELRVGLSVSKKIGNAVVRNRVKRLIRQAVQEEKELLKPKDFIIIARKPAGDLSFEETKKSLQHLFRKTSLYKKSSSK.

This sequence belongs to the RnpA family. As to quaternary structure, consists of a catalytic RNA component (M1 or rnpB) and a protein subunit.

It carries out the reaction Endonucleolytic cleavage of RNA, removing 5'-extranucleotides from tRNA precursor.. Functionally, RNaseP catalyzes the removal of the 5'-leader sequence from pre-tRNA to produce the mature 5'-terminus. It can also cleave other RNA substrates such as 4.5S RNA. The protein component plays an auxiliary but essential role in vivo by binding to the 5'-leader sequence and broadening the substrate specificity of the ribozyme. In Bacillus velezensis (strain DSM 23117 / BGSC 10A6 / LMG 26770 / FZB42) (Bacillus amyloliquefaciens subsp. plantarum), this protein is Ribonuclease P protein component.